The chain runs to 262 residues: Hydroxyethylthiazole kinase (262 aa).

Substrate is bound at residue M50. Positions 125 and 171 each coordinate ATP. A substrate-binding site is contributed by G198.

The protein belongs to the Thz kinase family. It depends on Mg(2+) as a cofactor.

The catalysed reaction is 5-(2-hydroxyethyl)-4-methylthiazole + ATP = 4-methyl-5-(2-phosphooxyethyl)-thiazole + ADP + H(+). The protein operates within cofactor biosynthesis; thiamine diphosphate biosynthesis; 4-methyl-5-(2-phosphoethyl)-thiazole from 5-(2-hydroxyethyl)-4-methylthiazole: step 1/1. Catalyzes the phosphorylation of the hydroxyl group of 4-methyl-5-beta-hydroxyethylthiazole (THZ). In Escherichia coli (strain SMS-3-5 / SECEC), this protein is Hydroxyethylthiazole kinase.